The primary structure comprises 460 residues: A-type ATP synthase subunit B (460 aa).

The protein belongs to the ATPase alpha/beta chains family. Has multiple subunits with at least A(3), B(3), C, D, E, F, H, I and proteolipid K(x).

The protein resides in the cell membrane. Component of the A-type ATP synthase that produces ATP from ADP in the presence of a proton gradient across the membrane. The B chain is a regulatory subunit. In Thermoplasma volcanium (strain ATCC 51530 / DSM 4299 / JCM 9571 / NBRC 15438 / GSS1), this protein is A-type ATP synthase subunit B.